Consider the following 914-residue polypeptide: Inter-alpha-trypsin inhibitor heavy chain H1 (914 aa).

Residues 1 to 30 (MDGAAVGLRVLLGLGLVSLLTLEAMPAAWG) form the signal peptide. The propeptide occupies 31 to 36 (LATTGR). The VIT domain maps to 39 to 168 (AREKRQAVDT…KATFQLTYEE (130 aa)). Cysteine 62 carries an S-linked (Hex...) cysteine glycan. Serine 131 carries the phosphoserine modification. N-linked (GlcNAc...) asparagine glycans are attached at residues asparagine 288 and asparagine 291. Residues 293-453 (SKNLVFVIDI…FNFLEVMSME (161 aa)) enclose the VWFA domain. Residues threonine 405 and threonine 410 each carry the phosphothreonine modification. N-linked (GlcNAc...) asparagine glycosylation is present at asparagine 591. Threonine 656 is a glycosylation site (O-linked (GalNAc...) threonine). Aspartate 675 is modified (aspartate 1-(chondroitin 4-sulfate)-ester). Positions 676–914 (PHFIIYVPQK…HTDYIVPDIF (239 aa)) are excised as a propeptide.

It belongs to the ITIH family. As to quaternary structure, I-alpha-I plasma protease inhibitors are assembled from one or two heavy chains (HC) and one light chain, bikunin. Inter-alpha-inhibitor (I-alpha-I) is composed of ITIH1/HC1, ITIH2/HC2 and bikunin. Interacts with TNFAIP6 (via Link and CUB domains). Post-translationally, heavy chains are linked to bikunin via chondroitin 4-sulfate esterified to the alpha-carboxyl of the C-terminal aspartate after propeptide cleavage. In terms of processing, the S-linked glycan is composed of two 6-carbon sugars, possibly Glc or Gal.

It is found in the secreted. In terms of biological role, may act as a carrier of hyaluronan in serum or as a binding protein between hyaluronan and other matrix protein, including those on cell surfaces in tissues to regulate the localization, synthesis and degradation of hyaluronan which are essential to cells undergoing biological processes. The sequence is that of Inter-alpha-trypsin inhibitor heavy chain H1 (ITIH1) from Mesocricetus auratus (Golden hamster).